The following is a 537-amino-acid chain: Lariat debranching enzyme (537 aa).

The a divalent metal cation site is built by C8, H10, D39, and N84. A lariat recognition loop region spans residues 124–154; the sequence is SGIYKGHDFLRGHHEFPPYTESTCRSVYHVR. The a divalent metal cation site is built by H174, H226, and H228. 2 disordered regions span residues 242–272 and 473–537; these read KAPTKMGDGSSSSSSSSSSESDDEESTSRLP and TAAE…EDDD. Positions 251 to 260 are enriched in low complexity; it reads SSSSSSSSSS.

Belongs to the lariat debranching enzyme family. It depends on Fe(2+) as a cofactor. Zn(2+) is required as a cofactor. Mn(2+) serves as cofactor.

It localises to the nucleus. Its activity is regulated as follows. Active in presence of diverse metals including Fe(2+), Zn(2+), Mn(2+). Binds two metal cations in two adjacent alpha and beta metal-binding pockets. In terms of biological role, cleaves the 2'-5' phosphodiester linkage at the branch point of lariat intron pre-mRNAs after splicing and converts them into linear molecules that are subsequently degraded. It thereby facilitates ribonucleotide turnover. In Drosophila pseudoobscura pseudoobscura (Fruit fly), this protein is Lariat debranching enzyme (DBR1).